A 218-amino-acid polypeptide reads, in one-letter code: MLFISATNTNAGKTTCARLLAQYCNACGVKTILLKPIETGVNDAINHSSDAHLFLQDNRLLDRSLTLKDISFYRYHKASAPLIAQQEEDPNAPIDTDNLTQRLHNFTKTYDLVIVEGAGGLCVPITLEENMLDFALKLKAKMLLISHDNLGLINDCLLNDFLLKSYQLDYKIAINLRGNNTAFYSVSLPYIELFNKRSNNPIVIFQQSLKELMSFALK.

Asparagine 10–threonine 15 provides a ligand contact to ATP. Threonine 14 is a binding site for Mg(2+). Lysine 35 is an active-site residue. Threonine 39 contacts substrate. Glutamate 116 contacts Mg(2+). ATP-binding positions include glutamate 116–glycine 119 and leucine 176–arginine 177.

The protein belongs to the dethiobiotin synthetase family. In terms of assembly, homodimer. Requires Mg(2+) as cofactor.

The protein resides in the cytoplasm. It carries out the reaction (7R,8S)-7,8-diammoniononanoate + CO2 + ATP = (4R,5S)-dethiobiotin + ADP + phosphate + 3 H(+). The protein operates within cofactor biosynthesis; biotin biosynthesis; biotin from 7,8-diaminononanoate: step 1/2. Catalyzes a mechanistically unusual reaction, the ATP-dependent insertion of CO2 between the N7 and N8 nitrogen atoms of 7,8-diaminopelargonic acid (DAPA, also called 7,8-diammoniononanoate) to form a ureido ring. The chain is ATP-dependent dethiobiotin synthetase BioD from Helicobacter pylori (strain J99 / ATCC 700824) (Campylobacter pylori J99).